The primary structure comprises 407 residues: Tryptophan synthase beta chain (407 aa).

Lys-91 is modified (N6-(pyridoxal phosphate)lysine).

This sequence belongs to the TrpB family. In terms of assembly, tetramer of two alpha and two beta chains. It depends on pyridoxal 5'-phosphate as a cofactor.

The catalysed reaction is (1S,2R)-1-C-(indol-3-yl)glycerol 3-phosphate + L-serine = D-glyceraldehyde 3-phosphate + L-tryptophan + H2O. It functions in the pathway amino-acid biosynthesis; L-tryptophan biosynthesis; L-tryptophan from chorismate: step 5/5. The beta subunit is responsible for the synthesis of L-tryptophan from indole and L-serine. This chain is Tryptophan synthase beta chain, found in Streptococcus pneumoniae serotype 2 (strain D39 / NCTC 7466).